Reading from the N-terminus, the 386-residue chain is Cytochrome b (386 aa).

Transmembrane regions (helical) follow at residues 32–52, 76–98, 113–133, and 179–199; these read FGSL…TLAM, WLIR…LHMG, TWNI…LGYV, and FFSL…MHLI. Heme b is bound by residues H82 and H96. Residues H183 and H197 each contribute to the heme b site. An a ubiquinone-binding site is contributed by H202. 4 helical membrane passes run 226 to 246, 290 to 310, 322 to 342, and 349 to 369; these read FLFK…IFVL, TLGV…PYLD, LSKI…ILGA, and FIIF…IITP.

This sequence belongs to the cytochrome b family. Fungal cytochrome b-c1 complex contains 10 subunits; 3 respiratory subunits, 2 core proteins and 5 low-molecular weight proteins. Cytochrome b-c1 complex is a homodimer. Requires heme b as cofactor.

It is found in the mitochondrion inner membrane. Functionally, component of the ubiquinol-cytochrome c reductase complex (complex III or cytochrome b-c1 complex) that is part of the mitochondrial respiratory chain. The b-c1 complex mediates electron transfer from ubiquinol to cytochrome c. Contributes to the generation of a proton gradient across the mitochondrial membrane that is then used for ATP synthesis. The sequence is that of Cytochrome b (COB) from Trichophyton rubrum (Athlete's foot fungus).